A 462-amino-acid chain; its full sequence is ATP synthase subunit beta (462 aa).

151 to 158 (GGAGVGKT) serves as a coordination point for ATP.

It belongs to the ATPase alpha/beta chains family. As to quaternary structure, F-type ATPases have 2 components, CF(1) - the catalytic core - and CF(0) - the membrane proton channel. CF(1) has five subunits: alpha(3), beta(3), gamma(1), delta(1), epsilon(1). CF(0) has four main subunits: a(1), b(1), b'(1) and c(9-12).

Its subcellular location is the cell inner membrane. It carries out the reaction ATP + H2O + 4 H(+)(in) = ADP + phosphate + 5 H(+)(out). In terms of biological role, produces ATP from ADP in the presence of a proton gradient across the membrane. The catalytic sites are hosted primarily by the beta subunits. The chain is ATP synthase subunit beta from Chlorobium phaeobacteroides (strain DSM 266 / SMG 266 / 2430).